The sequence spans 643 residues: Protein disulfide-isomerase A4 (643 aa).

A signal peptide spans 1-20 (MKLRKAWLLVLLLALTQLLA). Thioredoxin domains lie at 21–167 (AASA…EVSQ) and 167–299 (QPDW…EFLK). Residues 24-58 (AEDAHEDASDSENPIEDDDDEEEDEEDEDDLEVKE) are disordered. Residues 32 to 56 (SDSENPIEDDDDEEEDEEDEDDLEV) are compositionally biased toward acidic residues. A CXXC motif is present at residues 89–92 (CGHC). 2 cysteine pairs are disulfide-bonded: Cys89–Cys92 and Cys204–Cys207. Lys364 is subject to N6-acetyllysine. The Thioredoxin 3 domain occupies 503–634 (FKKGKLKPVI…LSKFIDEHAT (132 aa)). The short motif at 553-556 (CGHC) is the CXXC element. An intrachain disulfide couples Cys553 to Cys556. Residues 640–643 (KEEL) carry the Prevents secretion from ER motif.

Belongs to the protein disulfide isomerase family. In terms of assembly, part of a large chaperone multiprotein complex comprising DNAJB11, HSP90B1, HSPA5, HYOU, PDIA2, PDIA4, PDIA6, PPIB, SDF2L1, UGGT1 and very small amounts of ERP29, but not, or at very low levels, CALR nor CANX. Component of a complex containing at least CRELD2, MANF, MATN3 and PDIA4. In terms of processing, O-glycosylated.

The protein localises to the endoplasmic reticulum lumen. It is found in the melanosome. It carries out the reaction Catalyzes the rearrangement of -S-S- bonds in proteins.. The chain is Protein disulfide-isomerase A4 (Pdia4) from Rattus norvegicus (Rat).